Consider the following 403-residue polypeptide: MPTSKRTAAIIVAAGRGLRAGTGGPKQYRTIAGRTVIARAMEAFCDHPDVFAVQPVLNPDDLAMFNQAVAGFRYRPPANGGATRQASVHAGLEALAADAPDIVLIHDAARPFATPALIRRAIEATDITGAAVPVIPVTDTIKQVDASGAVNATPDRAKLRIAQTPQAFRFDVILDAHRRAARDGRDDFTDDAALAEWVGLTVATFEGDAANMKLTTPEDFVREEARLAAMLGDIRTGTGYDVHAFGDGDHVMLCGVKVPHNRGFLAHSDGDVGLHALVDAILGALADGDIGSHFPPSDPQWKGAASDKFLKYAVDRVAARGGRIANLEVTMICERPKIGPLRDTMRARIAEITGVAISRIAVKATTSERLGFTGREEGIATTASATVRLPWNDSDQEDKGWST.

The 2-C-methyl-D-erythritol 4-phosphate cytidylyltransferase stretch occupies residues 1–234 (MPTSKRTAAI…ARLAAMLGDI (234 aa)). Residues 235–403 (RTGTGYDVHA…SDQEDKGWST (169 aa)) are 2-C-methyl-D-erythritol 2,4-cyclodiphosphate synthase. D241 and H243 together coordinate a divalent metal cation. 4-CDP-2-C-methyl-D-erythritol 2-phosphate contacts are provided by residues 241-243 (DVH) and 267-268 (HS). An a divalent metal cation-binding site is contributed by H275. 4-CDP-2-C-methyl-D-erythritol 2-phosphate contacts are provided by residues 289-291 (DIG), 365-368 (TTSE), F372, and R375.

This sequence in the N-terminal section; belongs to the IspD/TarI cytidylyltransferase family. IspD subfamily. It in the C-terminal section; belongs to the IspF family. A divalent metal cation is required as a cofactor.

The catalysed reaction is 2-C-methyl-D-erythritol 4-phosphate + CTP + H(+) = 4-CDP-2-C-methyl-D-erythritol + diphosphate. The enzyme catalyses 4-CDP-2-C-methyl-D-erythritol 2-phosphate = 2-C-methyl-D-erythritol 2,4-cyclic diphosphate + CMP. The protein operates within isoprenoid biosynthesis; isopentenyl diphosphate biosynthesis via DXP pathway; isopentenyl diphosphate from 1-deoxy-D-xylulose 5-phosphate: step 2/6. It participates in isoprenoid biosynthesis; isopentenyl diphosphate biosynthesis via DXP pathway; isopentenyl diphosphate from 1-deoxy-D-xylulose 5-phosphate: step 4/6. In terms of biological role, bifunctional enzyme that catalyzes the formation of 4-diphosphocytidyl-2-C-methyl-D-erythritol from CTP and 2-C-methyl-D-erythritol 4-phosphate (MEP) (IspD), and catalyzes the conversion of 4-diphosphocytidyl-2-C-methyl-D-erythritol 2-phosphate (CDP-ME2P) to 2-C-methyl-D-erythritol 2,4-cyclodiphosphate (ME-CPP) with a corresponding release of cytidine 5-monophosphate (CMP) (IspF). This chain is Bifunctional enzyme IspD/IspF, found in Nitrobacter hamburgensis (strain DSM 10229 / NCIMB 13809 / X14).